The sequence spans 510 residues: Histidine ammonia-lyase (510 aa).

Positions 143–145 form a cross-link, 5-imidazolinone (Ala-Gly); it reads ASG. Serine 144 is modified (2,3-didehydroalanine (Ser)).

The protein belongs to the PAL/histidase family. In terms of processing, contains an active site 4-methylidene-imidazol-5-one (MIO), which is formed autocatalytically by cyclization and dehydration of residues Ala-Ser-Gly.

It localises to the cytoplasm. It carries out the reaction L-histidine = trans-urocanate + NH4(+). It participates in amino-acid degradation; L-histidine degradation into L-glutamate; N-formimidoyl-L-glutamate from L-histidine: step 1/3. In Shewanella pealeana (strain ATCC 700345 / ANG-SQ1), this protein is Histidine ammonia-lyase.